The primary structure comprises 37 residues: Potassium channel toxin alpha-KTx 1.13 (37 aa).

At Q1 the chain carries Pyrrolidone carboxylic acid. 3 disulfide bridges follow: C7–C28, C13–C33, and C17–C35. Residues 26–33 (GKCMNKKC) form an interaction with Ca(2+)-activated K(+) channels region.

Belongs to the short scorpion toxin superfamily. Potassium channel inhibitor family. Alpha-KTx 01 subfamily. As to expression, expressed by the venom gland.

The protein localises to the secreted. Its function is as follows. Potent selective inhibitor of high conductance (maxi-K), different medium and small conductance calcium-activated potassium channels (KCa1.1/KCNMA1 and others), as well as a voltage-dependent potassium channel (Kv1.3/KCNA3&gt;Kv1.2/KCNA2&gt;Kv1.6/KCNA3&gt;&gt;Shaker/Sh). It blocks channel activity by a simple bimolecular inhibition process. Functionally, has a pH-specific antimicrobial activity against bacteria (B.subtilis, E.coli and S.aureus) and the fungus C.albicans. The sequence is that of Potassium channel toxin alpha-KTx 1.13 from Leiurus hebraeus (Hebrew deathstalker scorpion).